Consider the following 947-residue polypeptide: DNA mismatch repair protein MutS 2 (947 aa).

The segment at 623–643 (IPNDTHLGSGPVPASRDGSDD) is disordered. Residue 659-666 (GPNMSGKS) participates in ATP binding. The disordered stretch occupies residues 841–916 (AETADTGVEA…GAAAEDELPE (76 aa)).

It belongs to the DNA mismatch repair MutS family.

Functionally, this protein is involved in the repair of mismatches in DNA. It is possible that it carries out the mismatch recognition step. This protein has a weak ATPase activity. This chain is DNA mismatch repair protein MutS 2, found in Haloarcula marismortui (strain ATCC 43049 / DSM 3752 / JCM 8966 / VKM B-1809) (Halobacterium marismortui).